The following is a 473-amino-acid chain: H(+)/Cl(-) exchange transporter ClcA (473 aa).

The Cytoplasmic portion of the chain corresponds to 1–32; the sequence is MKTDTPSLETPQAARLRRRQLIRQLLERDKTP. The helical transmembrane segment at 33 to 69 threads the bilayer; sequence LAILFMAAVVGTLVGLAAVAFDKGVAWLQNQRMGALV. Residues 70–76 are Periplasmic-facing; the sequence is HTADNYP. Residues 77 to 100 form a helical membrane-spanning segment; the sequence is LLLTVAFLCSAVLAMFGYFLVRKY. Positions 106–110 match the Selectivity filter part_1 motif; that stretch reads GSGIP. Ser107 contributes to the chloride binding site. Residues 109–116 constitute an intramembrane region (helical); sequence IPEIEGAL. The Cytoplasmic portion of the chain corresponds to 117–123; that stretch reads EDQRPVR. A run of 2 helical transmembrane segments spans residues 124–141 and 148–166; these read WWRVLPVKFFGGLGTLGG and EGPTVQIGGNIGRMVLDVF. The short motif at 146-150 is the Selectivity filter part_2 element; that stretch reads GREGP. The Cytoplasmic portion of the chain corresponds to 167–176; that stretch reads RLKGDEARHT. 2 intramembrane regions (helical) span residues 177 to 189 and 193 to 201; these read LLATGAAAGLAAA and PLAGILFII. Residues 202–214 are Cytoplasmic-facing; the sequence is EEMRPQFRYTLIS. Residues 215-232 traverse the membrane as a helical segment; it reads IKAVFIGVIMSTIMYRIF. Over 233 to 252 the chain is Periplasmic; sequence NHEVALIDVGKLSDAPLNTL. Residues 253–281 form a helical membrane-spanning segment; the sequence is WLYLILGIIFGIFGPIFNKWVLGMQDLLH. Topologically, residues 282-287 are cytoplasmic; that stretch reads RVHGGN. The helical transmembrane segment at 288–309 threads the bilayer; that stretch reads ITKWVLMGGAIGGLCGLLGFVA. At 310–329 the chain is on the periplasmic side; sequence PATSGGGFNLIPIATAGNFS. Helical transmembrane passes span 330–349 and 355–376; these read MGMLVFIFVARVITTLLCFS and GIFAPMLALGTVLGTAFGMVAV. Positions 355–359 match the Selectivity filter part_3 motif; it reads GIFAP. Chloride is bound by residues Ile356 and Phe357. The Periplasmic portion of the chain corresponds to 377-386; it reads ELFPQYHLEA. The helical intramembrane region spans 387–401; sequence GTFAIAGMGALLAAS. The segment at residues 402 to 404 is an intramembrane region (note=Loop between two helices); sequence IRA. The helical intramembrane region spans 405-416; that stretch reads PLTGIILVLEMT. Positions 417–421 form an intramembrane region, note=Loop between two helices; that stretch reads DNYQL. The chain crosses the membrane as a helical span at residues 422 to 438; that stretch reads ILPMIITGLGATLLAQF. The Cytoplasmic portion of the chain corresponds to 439-473; the sequence is TGGKPLYSAILARTLAKQEAEQLARSKAASASENT. Tyr445 lines the chloride pocket.

The protein belongs to the chloride channel (TC 2.A.49) family. ClcA subfamily. In terms of assembly, homodimer.

It is found in the cell inner membrane. The enzyme catalyses 2 chloride(in) + H(+)(out) = 2 chloride(out) + H(+)(in). In terms of biological role, proton-coupled chloride transporter. Functions as antiport system and exchanges two chloride ions for 1 proton. Probably acts as an electrical shunt for an outwardly-directed proton pump that is linked to amino acid decarboxylation, as part of the extreme acid resistance (XAR) response. The sequence is that of H(+)/Cl(-) exchange transporter ClcA from Escherichia coli O157:H7.